The following is an 82-amino-acid chain: Putative defensin-like protein 134 (82 aa).

An N-terminal signal peptide occupies residues 1–26 (MEVRSLNLCFLLVLVLLMSPAPTAVA). 4 cysteine pairs are disulfide-bonded: cysteine 32–cysteine 79, cysteine 42–cysteine 68, cysteine 47–cysteine 74, and cysteine 51–cysteine 76.

Belongs to the DEFL family.

It localises to the secreted. In Arabidopsis thaliana (Mouse-ear cress), this protein is Putative defensin-like protein 134.